The chain runs to 286 residues: 4-hydroxy-tetrahydrodipicolinate synthase (286 aa).

Thr42 serves as a coordination point for pyruvate. Tyr129 (proton donor/acceptor) is an active-site residue. The active-site Schiff-base intermediate with substrate is the Lys157. Val196 is a binding site for pyruvate.

This sequence belongs to the DapA family. In terms of assembly, homotetramer; dimer of dimers.

It is found in the cytoplasm. The enzyme catalyses L-aspartate 4-semialdehyde + pyruvate = (2S,4S)-4-hydroxy-2,3,4,5-tetrahydrodipicolinate + H2O + H(+). Its pathway is amino-acid biosynthesis; L-lysine biosynthesis via DAP pathway; (S)-tetrahydrodipicolinate from L-aspartate: step 3/4. Functionally, catalyzes the condensation of (S)-aspartate-beta-semialdehyde [(S)-ASA] and pyruvate to 4-hydroxy-tetrahydrodipicolinate (HTPA). This is 4-hydroxy-tetrahydrodipicolinate synthase from Chlamydia muridarum (strain MoPn / Nigg).